Consider the following 689-residue polypeptide: Glycine--tRNA ligase beta subunit (689 aa).

Belongs to the class-II aminoacyl-tRNA synthetase family. Tetramer of two alpha and two beta subunits.

Its subcellular location is the cytoplasm. It carries out the reaction tRNA(Gly) + glycine + ATP = glycyl-tRNA(Gly) + AMP + diphosphate. This Yersinia enterocolitica serotype O:8 / biotype 1B (strain NCTC 13174 / 8081) protein is Glycine--tRNA ligase beta subunit.